The chain runs to 498 residues: Probable malate:quinone oxidoreductase (498 aa).

The protein belongs to the MQO family. It depends on FAD as a cofactor.

It carries out the reaction (S)-malate + a quinone = a quinol + oxaloacetate. It participates in carbohydrate metabolism; tricarboxylic acid cycle; oxaloacetate from (S)-malate (quinone route): step 1/1. The chain is Probable malate:quinone oxidoreductase from Prochlorococcus marinus (strain MIT 9312).